Consider the following 440-residue polypeptide: tRNA (guanine(37)-N(1))-methyltransferase (440 aa).

S-adenosyl-L-methionine is bound by residues H217, 255–256 (DL), 283–284 (DG), and N315.

This sequence belongs to the class I-like SAM-binding methyltransferase superfamily. TRM5/TYW2 family. Monomer.

It localises to the mitochondrion matrix. The protein localises to the nucleus. It is found in the cytoplasm. The catalysed reaction is guanosine(37) in tRNA + S-adenosyl-L-methionine = N(1)-methylguanosine(37) in tRNA + S-adenosyl-L-homocysteine + H(+). Its function is as follows. Specifically methylates the N1 position of guanosine-37 in various cytoplasmic and mitochondrial tRNAs. Methylation is not dependent on the nature of the nucleoside 5' of the target nucleoside. This is the first step in the biosynthesis of wybutosine (yW), a modified base adjacent to the anticodon of tRNAs and required for accurate decoding. The polypeptide is tRNA (guanine(37)-N(1))-methyltransferase (Drosophila pseudoobscura pseudoobscura (Fruit fly)).